Here is a 361-residue protein sequence, read N- to C-terminus: D-alanine--D-alanine ligase (361 aa).

The 211-residue stretch at 134-344 folds into the ATP-grasp domain; the sequence is KLLLKSFNIP…FKDLVDNLIN (211 aa). 167 to 222 is a binding site for ATP; the sequence is REALGYPVIVKPAVLGSSIGINVAYSENQIEFFIEEALKYDLTILIEKFIEAREIE. Mg(2+)-binding residues include D297, E311, and N313.

It belongs to the D-alanine--D-alanine ligase family. The cofactor is Mg(2+). Mn(2+) is required as a cofactor.

The protein resides in the cytoplasm. The catalysed reaction is 2 D-alanine + ATP = D-alanyl-D-alanine + ADP + phosphate + H(+). Its pathway is cell wall biogenesis; peptidoglycan biosynthesis. Its function is as follows. Cell wall formation. The chain is D-alanine--D-alanine ligase from Borrelia garinii subsp. bavariensis (strain ATCC BAA-2496 / DSM 23469 / PBi) (Borreliella bavariensis).